The sequence spans 367 residues: Probable butyrate kinase (367 aa).

Belongs to the acetokinase family.

It localises to the cytoplasm. The enzyme catalyses butanoate + ATP = butanoyl phosphate + ADP. This is Probable butyrate kinase from Bacillus cytotoxicus (strain DSM 22905 / CIP 110041 / 391-98 / NVH 391-98).